A 224-amino-acid chain; its full sequence is tRNA (guanine-N(7)-)-methyltransferase (224 aa).

S-adenosyl-L-methionine-binding residues include Glu54, Glu79, Glu106, and Asp129. The active site involves Asp129. Substrate is bound by residues Lys133 and Asp165.

Belongs to the class I-like SAM-binding methyltransferase superfamily. TrmB family.

It carries out the reaction guanosine(46) in tRNA + S-adenosyl-L-methionine = N(7)-methylguanosine(46) in tRNA + S-adenosyl-L-homocysteine. The protein operates within tRNA modification; N(7)-methylguanine-tRNA biosynthesis. In terms of biological role, catalyzes the formation of N(7)-methylguanine at position 46 (m7G46) in tRNA. The protein is tRNA (guanine-N(7)-)-methyltransferase of Chlamydia trachomatis serovar D (strain ATCC VR-885 / DSM 19411 / UW-3/Cx).